A 352-amino-acid chain; its full sequence is Probable RNA methyltransferase CV_2253 (352 aa).

The active-site Proton acceptor is Glu-91. In terms of domain architecture, Radical SAM core spans 94–320; sequence LLPRDGLCVS…TKVRDSAGQD (227 aa). Residues Cys-101 and Cys-325 are joined by a disulfide bond. Cys-108, Cys-112, and Cys-115 together coordinate [4Fe-4S] cluster. S-adenosyl-L-methionine is bound by residues 153–154, Ser-183, 206–208, and Asn-282; these read GE and SLH. Catalysis depends on Cys-325, which acts as the S-methylcysteine intermediate.

This sequence belongs to the radical SAM superfamily. RlmN family. [4Fe-4S] cluster is required as a cofactor.

It is found in the cytoplasm. The polypeptide is Probable RNA methyltransferase CV_2253 (Chromobacterium violaceum (strain ATCC 12472 / DSM 30191 / JCM 1249 / CCUG 213 / NBRC 12614 / NCIMB 9131 / NCTC 9757 / MK)).